The chain runs to 333 residues: Photosystem II assembly lipoprotein Ycf48 (333 aa).

An N-terminal signal peptide occupies residues 1-23; the sequence is MKRLLNSATQLLLVLVLGISLSG. Cys24 carries N-palmitoyl cysteine lipidation. The S-diacylglycerol cysteine moiety is linked to residue Cys24.

It belongs to the Ycf48 family. Part of early PSII assembly complexes which includes D1 (psbA) and PsbI; not found in mature PSII. Binds to the lumenal side of PSII complexes. Interacts with YidC.

Its subcellular location is the cellular thylakoid membrane. Functionally, a factor required for optimal assembly of photosystem II (PSII), acting in the early stages of PSII assembly. Also plays a role in replacement of photodamaged D1 (psbA). Assists YidC in synthesis of chlorophyll-binding proteins. The polypeptide is Photosystem II assembly lipoprotein Ycf48 (Synechococcus sp. (strain CC9605)).